The chain runs to 500 residues: Cysteine-rich secretory protein LCCL domain-containing 1 (500 aa).

The first 23 residues, 1-23, serve as a signal peptide directing secretion; sequence MKCTAREWLRVTTVLFMARAIPA. The 141-residue stretch at 66–206 folds into the SCP domain; it reads LDLHNKLRSQ…PKAVYLVCNY (141 aa). Basic and acidic residues predominate over residues 254 to 280; the sequence is EETNEIERQQSQVHDTHVRTRSDDSSR. The segment at 254–281 is disordered; sequence EETNEIERQQSQVHDTHVRTRSDDSSRN. LCCL domains are found at residues 289-384 and 390-492; these read MSQI…ANSF and TVQA…PGGK. 4 cysteine pairs are disulfide-bonded: Cys-295-Cys-313, Cys-317-Cys-337, Cys-396-Cys-418, and Cys-422-Cys-445.

It belongs to the CRISP family.

The protein resides in the secreted. This Homo sapiens (Human) protein is Cysteine-rich secretory protein LCCL domain-containing 1 (CRISPLD1).